Here is a 132-residue protein sequence, read N- to C-terminus: UPF0299 membrane protein YohJ (132 aa).

The next 4 helical transmembrane spans lie at 7–27 (IIWQ…AGIF), 31–51 (LLPV…VLLA), 63–83 (GCYV…VGVM), and 93–113 (FGPV…VMSW).

This sequence belongs to the UPF0299 family.

It localises to the cell inner membrane. The protein is UPF0299 membrane protein YohJ of Shigella dysenteriae serotype 1 (strain Sd197).